The following is a 240-amino-acid chain: Rho GDP-dissociation inhibitor 1 (240 aa).

The segment at 1 to 66 is disordered; it reads MSLVSGARDM…DDDSKLQLGP (66 aa).

It belongs to the Rho GDI family. As to quaternary structure, interacts with RAC-like GTP binding proteins ARAC5/ROP4 and ARAC3/ROP6.

It is found in the cytoplasm. Functionally, regulates the GDP/GTP exchange reaction of the Rho proteins by inhibiting the dissociation of GDP from them, and the subsequent binding of GTP to them. The chain is Rho GDP-dissociation inhibitor 1 (GDI1) from Arabidopsis thaliana (Mouse-ear cress).